A 67-amino-acid polypeptide reads, in one-letter code: PLPEIILNKVREGEALGPVMSQYTGIDEIGRKEGAIGVFTKGVLTRSGVYHQAVVLALSPFHNAIYR.

Belongs to the YjjX NTPase family. As to quaternary structure, homodimer. Requires Mg(2+) as cofactor. Mn(2+) serves as cofactor.

The catalysed reaction is XTP + H2O = XDP + phosphate + H(+). The enzyme catalyses ITP + H2O = IDP + phosphate + H(+). Functionally, phosphatase that hydrolyzes non-canonical purine nucleotides such as XTP and ITP to their respective diphosphate derivatives. Probably excludes non-canonical purines from DNA/RNA precursor pool, thus preventing their incorporation into DNA/RNA and avoiding chromosomal lesions. This is Inosine/xanthosine triphosphatase from Enterobacter cloacae.